We begin with the raw amino-acid sequence, 264 residues long: MVTMKDLLECGVHFGHQTRRWNPKTKKFIFGVRKNIHIIDLQKTLRYFRYTYNIVRDASAQGKSIMFVGTKKQANETLKEFAESIQVPYVNYRWLGGMLTNFSTIRKSVRKLEIIEEMENSGQIDLLTKKEKLMILRKKEKLDKYLGGVRHMKKIPDMIFVIDVAKEKIAVAEARKLHIPIVAPLDTNCDPDLVDYPIPGNDDAIRSIRLFCKEMSEAILEGRELMQEEIVHADENSEEIEYVSNEEKEEMLAEIQKEITQGAE.

This sequence belongs to the universal ribosomal protein uS2 family.

This chain is Small ribosomal subunit protein uS2, found in Helicobacter pylori (strain Shi470).